A 284-amino-acid polypeptide reads, in one-letter code: L-ribulose-5-phosphate 3-epimerase UlaE (284 aa).

The protein belongs to the L-ribulose-5-phosphate 3-epimerase family.

The catalysed reaction is L-ribulose 5-phosphate = L-xylulose 5-phosphate. It participates in cofactor degradation; L-ascorbate degradation; D-xylulose 5-phosphate from L-ascorbate: step 3/4. In terms of biological role, catalyzes the isomerization of L-xylulose-5-phosphate to L-ribulose-5-phosphate. Is involved in the anaerobic L-ascorbate utilization. This is L-ribulose-5-phosphate 3-epimerase UlaE from Escherichia coli O157:H7 (strain EC4115 / EHEC).